The following is a 261-amino-acid chain: 1-(5-phosphoribosyl)-5-[(5-phosphoribosylamino)methylideneamino] imidazole-4-carboxamide isomerase (261 aa).

The Proton acceptor role is filled by Asp15. Asp136 serves as the catalytic Proton donor.

This sequence belongs to the HisA/HisF family.

The protein localises to the cytoplasm. It catalyses the reaction 1-(5-phospho-beta-D-ribosyl)-5-[(5-phospho-beta-D-ribosylamino)methylideneamino]imidazole-4-carboxamide = 5-[(5-phospho-1-deoxy-D-ribulos-1-ylimino)methylamino]-1-(5-phospho-beta-D-ribosyl)imidazole-4-carboxamide. Its pathway is amino-acid biosynthesis; L-histidine biosynthesis; L-histidine from 5-phospho-alpha-D-ribose 1-diphosphate: step 4/9. This Synechococcus sp. (strain JA-3-3Ab) (Cyanobacteria bacterium Yellowstone A-Prime) protein is 1-(5-phosphoribosyl)-5-[(5-phosphoribosylamino)methylideneamino] imidazole-4-carboxamide isomerase.